A 783-amino-acid polypeptide reads, in one-letter code: Flavin carrier protein 2 (783 aa).

Positions 1 to 22 are cleaved as a signal peptide; that stretch reads MIFLNTFARCLLTCFVLCSGTA. The Lumenal segment spans residues 23–182; it reads RSSDTNDTTP…NGKTVQTKYA (160 aa). Residues Asn-28, Asn-65, Asn-81, and Asn-156 are each glycosylated (N-linked (GlcNAc...) asparagine). A helical transmembrane segment spans residues 183–203; the sequence is AWPIAAISGVGVLTSGFVSVI. The Cytoplasmic portion of the chain corresponds to 204–211; it reads GYSATAAH. Residues 212–232 form a helical membrane-spanning segment; sequence IASNSISLFIYFQNLAITAMM. Topologically, residues 233 to 347 are lumenal; the sequence is GVSRVPPIAA…AYLANIELSN (115 aa). A glycan (N-linked (GlcNAc...) asparagine) is linked at Asn-323. A helical membrane pass occupies residues 348-368; sequence FFLTGIVFFLFFLFVVVVSLI. At 369 to 402 the chain is on the cytoplasmic side; the sequence is FFKALLEVLTRARILKETSNFFQYRKNWGSIIKG. A helical membrane pass occupies residues 403–423; the sequence is TLFRLSIIAFPQVSLLAIWEF. Residues 424–430 are Lumenal-facing; the sequence is TQVNSPA. A helical membrane pass occupies residues 431 to 451; it reads IVVDAVVILLIITGLLVYGTI. Over 452-492 the chain is Cytoplasmic; sequence RVFIKGRESLRLYKNPAYLLYSDTYFLNKFGFLYVQFKADK. Residues 493-513 form a helical membrane-spanning segment; it reads FWWLLPLLSYAFLRSLFVAVL. Residues 514–521 are Lumenal-facing; that stretch reads QNQGKAQA. Residues 522-542 form a helical membrane-spanning segment; that stretch reads MIIFVIELAYFVCLCWIRPYL. The Cytoplasmic portion of the chain corresponds to 543-547; the sequence is DKRTN. Residues 548 to 568 traverse the membrane as a helical segment; sequence VFNIAIHLVNLINAFFFLFFS. Residues 569–581 lie on the Lumenal side of the membrane; that stretch reads NLFKQPAVVSSVM. The helical transmembrane segment at 582 to 602 threads the bilayer; the sequence is AVILFVLNAVFALFLLLFTIV. The Cytoplasmic segment spans residues 603–783; that stretch reads TCTLALLHRN…ENARNNNPYL (181 aa). Residues 681-783 are disordered; sequence RLFDDETSSS…ENARNNNPYL (103 aa). The segment covering 688–697 has biased composition (low complexity); the sequence is SSSSFKQNSS. Composition is skewed to polar residues over residues 704 to 748 and 756 to 767; these read VTEQ…TSSL and YLGNSNKSYSHF. Low complexity predominate over residues 768–783; the sequence is NNNGSNENARNNNPYL.

It belongs to the transient receptor potential (TRP) ion channel family.

Its subcellular location is the endoplasmic reticulum membrane. May be responsible for the transport of FAD into the endoplasmic reticulum lumen, where it is required for oxidative protein folding. The chain is Flavin carrier protein 2 (FLC2) from Saccharomyces cerevisiae (strain ATCC 204508 / S288c) (Baker's yeast).